The following is a 468-amino-acid chain: UDP-N-acetylmuramate--L-alanine ligase (468 aa).

121–127 (GSHGKTT) lines the ATP pocket.

The protein belongs to the MurCDEF family.

It localises to the cytoplasm. It catalyses the reaction UDP-N-acetyl-alpha-D-muramate + L-alanine + ATP = UDP-N-acetyl-alpha-D-muramoyl-L-alanine + ADP + phosphate + H(+). It functions in the pathway cell wall biogenesis; peptidoglycan biosynthesis. Functionally, cell wall formation. This chain is UDP-N-acetylmuramate--L-alanine ligase, found in Borrelia garinii subsp. bavariensis (strain ATCC BAA-2496 / DSM 23469 / PBi) (Borreliella bavariensis).